A 123-amino-acid polypeptide reads, in one-letter code: Glycine cleavage system H protein (123 aa).

In terms of domain architecture, Lipoyl-binding spans 23 to 104; that stretch reads HWLAGITDHA…PYDAWIFSFE (82 aa). An N6-lipoyllysine modification is found at Lys64.

This sequence belongs to the GcvH family. In terms of assembly, the glycine cleavage system is composed of four proteins: P, T, L and H. Requires (R)-lipoate as cofactor.

In terms of biological role, the glycine cleavage system catalyzes the degradation of glycine. The H protein shuttles the methylamine group of glycine from the P protein to the T protein. The sequence is that of Glycine cleavage system H protein from Methylobacillus flagellatus (strain ATCC 51484 / DSM 6875 / VKM B-1610 / KT).